Consider the following 372-residue polypeptide: Alginate lyase (372 aa).

Residues 1–22 (MKTRLALPCLLGSLLLSSAVHA) form the signal peptide. Residues 61–62 (SK), 134–135 (HT), and Y252 contribute to the substrate site.

It belongs to the polysaccharide lyase 5 family.

The protein localises to the periplasm. It catalyses the reaction Eliminative cleavage of alginate to give oligosaccharides with 4-deoxy-alpha-L-erythro-hex-4-enuronosyl groups at their non-reducing ends and beta-D-mannuronate at their reducing end.. Its activity is regulated as follows. Monovalent cations such as potassium and sodium enhance activity, as well as a combined action of these cations with magnesium. However, other cations like calcium, cobalt, manganese and zinc, or the presence of EDTA, do not affect the enzymatic activity. Its function is as follows. Catalyzes the depolymerization of alginate by cleaving the beta-1,4 glycosidic bond between two adjacent sugar residues via a beta-elimination mechanism. Degrades deacetylated polymannuronate alginate more efficiently than non-deacetylated polyM. Is able to degrade its own alginate, but at a lower efficiency than that produced from M.pyriferia and P.aeruginosa. May serve to degrade mislocalized alginate that is trapped in the periplasmic space. The protein is Alginate lyase of Azotobacter chroococcum mcd 1.